Consider the following 1976-residue polypeptide: Myosin-10 (1976 aa).

Omega-N-methylarginine is present on arginine 18. A Myosin N-terminal SH3-like domain is found at 31-81 (TAKKLVWIPSERHGFEAASIKEERGDEVMVELAENGKKAMVNKDDIQKMNP). A Myosin motor domain is found at 85–783 (SKVEDMAELT…VLAHLEEERD (699 aa)). Residue 178-185 (GESGAGKT) participates in ATP binding. Residue lysine 442 is modified to N6-acetyllysine. Residues 661-683 (LTKLMATLRNTNPNFVRCIIPNH) form an actin-binding region. Residues 786-815 (ITDIIIFFQAVCRGYLARKAFAKKQQQLSA) enclose the IQ domain. A coiled-coil region spans residues 845-1976 (LQVTRQEEEL…VNDTQPPQSE (1132 aa)). The segment at 1125–1175 (EDFESEKASRNKAEKQKRDLSEELEALKTELEDTLDTTAAQQELRTKREQE) is disordered. The span at 1129–1155 (SEKASRNKAEKQKRDLSEELEALKTEL) shows a compositional bias: basic and acidic residues. Serine 1145 bears the Phosphoserine mark. N6-acetyllysine occurs at positions 1241, 1301, and 1645. Disordered stretches follow at residues 1697 to 1718 (ASSE…DEIA) and 1874 to 1976 (KANA…PQSE). Residues 1698 to 1708 (SSERARRHAEQ) show a composition bias toward basic and acidic residues. Omega-N-methylarginine is present on arginine 1930. Phosphoserine occurs at positions 1935, 1937, 1938, and 1939. An Omega-N-methylarginine modification is found at arginine 1940. 2 positions are modified to phosphoserine: serine 1952 and serine 1956. Threonine 1960 carries the post-translational modification Phosphothreonine. The span at 1967–1976 (VNDTQPPQSE) shows a compositional bias: polar residues. Serine 1975 is modified (phosphoserine).

This sequence belongs to the TRAFAC class myosin-kinesin ATPase superfamily. Myosin family. Myosin is a hexameric protein that consists of 2 heavy chain subunits (MHC), 2 alkali light chain subunits (MLC) and 2 regulatory light chain subunits (MLC-2). Interacts with PLEKHG6. Interacts with ECPAS. Interacts with LARP6. Interacts with MCC. Interacts with KIF26B. Interacts with CFAP95. Post-translationally, phosphorylated by ABL2. As to expression, in newborn kidney, expressed in the mesenchyme and ureteric buds.

Its subcellular location is the cell projection. The protein localises to the lamellipodium. Involved with LARP6 in the stabilization of type I collagen mRNAs for CO1A1 and CO1A2. During cell spreading, plays an important role in cytoskeleton reorganization, focal contacts formation (in the central part but not the margins of spreading cells), and lamellipodial extension; this function is mechanically antagonized by MYH9. Cellular myosin that appears to play a role in cytokinesis, cell shape, and specialized functions such as secretion and capping. In Mus musculus (Mouse), this protein is Myosin-10 (Myh10).